The following is a 452-amino-acid chain: Bifunctional F420 biosynthesis protein FbiB (452 aa).

The coenzyme F420:L-glutamate ligase stretch occupies residues 1 to 248; it reads MVSAPGDHAG…AGEEDLFWLG (248 aa). GTP is bound by residues 24–27, serine 54, and lysine 59; that span reads LPEF. Aspartate 113 provides a ligand contact to a divalent metal cation. Residue asparagine 116 participates in GTP binding. Residues aspartate 154 and threonine 155 each contribute to the a divalent metal cation site. The dehydro-coenzyme F420-0 reductase stretch occupies residues 249-452; that stretch reads TAEAVERGRR…RDPGDGLVER (204 aa). FMN-binding positions include 264–268 and alanine 292; that span reads RRSVR. Aspartate 324 is a binding site for coenzyme F420-(gamma-Glu)n. Residues glycine 403 and arginine 440 each contribute to the FMN site.

The protein in the N-terminal section; belongs to the CofE family. Requires Mg(2+) as cofactor. Mn(2+) serves as cofactor. The cofactor is K(+).

It catalyses the reaction oxidized coenzyme F420-0 + GTP + L-glutamate = oxidized coenzyme F420-1 + GDP + phosphate + H(+). The enzyme catalyses oxidized coenzyme F420-0 + FMN + H(+) = dehydro coenzyme F420-0 + FMNH2. It carries out the reaction oxidized coenzyme F420-1 + GTP + L-glutamate = oxidized coenzyme F420-2 + GDP + phosphate + H(+). It functions in the pathway cofactor biosynthesis; coenzyme F420 biosynthesis. Functionally, bifunctional enzyme that catalyzes the GTP-dependent successive addition of two or more gamma-linked L-glutamates to the L-lactyl phosphodiester of 7,8-didemethyl-8-hydroxy-5-deazariboflavin (F420-0) to form polyglutamated F420 derivatives, and the FMNH2-dependent reduction of dehydro-F420-0 to form F420-0. This chain is Bifunctional F420 biosynthesis protein FbiB, found in Nocardia farcinica (strain IFM 10152).